The chain runs to 412 residues: Docking protein 2 (412 aa).

Positions 4–114 (GAVKQGFLYL…WVQAICLLAF (111 aa)) constitute a PH domain. The region spanning 147-252 (PHKEFAVTMR…SAQKNAAPAT (106 aa)) is the IRS-type PTB domain. Residues 246-296 (KNAAPATPQPQPATIPASLPRPDSPYSRPHDSLPPPSPTTPVPAPRPRGQE) form a disordered region. Phosphotyrosine is present on Tyr-271. A compositionally biased stretch (pro residues) spans 277 to 291 (SLPPPSPTTPVPAPR). Phosphotyrosine is present on residues Tyr-299 and Tyr-345. A disordered region spans residues 359-412 (SPQEPRGEAWRRQATADRDPAGLQHVQPAGQDFSASGWQPGTEYDNVVLKKGPK). The segment covering 361–378 (QEPRGEAWRRQATADRDP) has biased composition (basic and acidic residues).

This sequence belongs to the DOK family. Type A subfamily. As to quaternary structure, interacts with phosphorylated RASGAP and EGFR. Interacts with RET and NCK. Interacts (via PH domain) with TEK/TIE2 (tyrosine phosphorylated). (Microbial infection) Interacts with Herpes simplex virus 1 (HHV-1) protein UL46; this interaction induces DOK2 phosphorylation and subsequent degradation. In terms of processing, on immunoreceptor stimulation, phosphorylated on C-terminal tyrosine residues. Phosphorylation on Tyr-345 is required for binding to the SH2 domain of NCK. Phosphorylation on both Tyr-271 and Tyr-299 is required for interaction with RASGAP. Phosphorylated on tyrosine residues by TEK/TIE2. Highly expressed in peripheral blood leukocytes, lymph nodes and spleen. Lower expression in thymus, bone marrow and fetal liver.

Its function is as follows. DOK proteins are enzymatically inert adaptor or scaffolding proteins. They provide a docking platform for the assembly of multimolecular signaling complexes. DOK2 may modulate the cellular proliferation induced by IL-4, as well as IL-2 and IL-3. May be involved in modulating Bcr-Abl signaling. Attenuates EGF-stimulated MAP kinase activation. This is Docking protein 2 (DOK2) from Homo sapiens (Human).